The following is a 486-amino-acid chain: Flavin-dependent monooxygenase pboD (486 aa).

FAD-binding residues include Asp51, Gly65, and Arg124. Arg203 is an active-site residue. FAD is bound by residues Asp344 and Gly357.

Belongs to the paxM FAD-dependent monooxygenase family. FAD serves as cofactor.

Its pathway is secondary metabolite biosynthesis. Functionally, flavin-dependent monooxygenase; part of the gene cluster that mediates the biosynthesis of protubonine B, a hydroxylated and diacetylated cyclo-L-Trp-L-Leu derivative. Within the pathway, pboD catalyzes the hydroxylation at C-3 of the indole ring of cyclo-L-Trp-L-Leu and subsequent formation of the pyrrolidine ring, eading to the production of protubonine D. PboD is also able to accept other cyclodipeptides (CDPs) as substrates, including cyclo-L-Trp-L-Trp, cyclo-L-Trp-L-Tyr, cyclo-L-Trp-L-Phe, cyclo-L-Trp-L-Met, cyclo-L-Trp-L-Ala, cyclo-L-Trp-L-Pro and cyclo-L-Trp-Gly. Assays with cyclo-L-Trp-L-Trp, cyclo-L-Trp-L-Tyr, cyclo-L-Trp-L-Phe show similar or even slightly higher conversion yields, compared with that of the natural substrate cyclo-L-Trp-L-Leu, whereas cyclo-L-Trp-L-Pro and cyclo-L-Trp-Gly are accepted by PboD but only with conversion yields of 10 and 4%, respectively. Cyclo-L-Trp-L-His is not accepted as a substrate. The first step of the protubonine B synthesis is performed by the nonribosomal peptide synthetase pboA that catalyzes the formation of cyclo-L-Trp-L-Leu by condensing L-Leu with L-Trp. The flavin-dependent monooxygenase pboD is responsible for hydroxylation at C-3 of the indole ring and subsequent formation of the pyrrolidine ring, leadind to protubonine D. Protubonine D is further diacetylated by two acetyltransferases, pboB and pboC, to form the final product protubonine B via protubonine C. The protein is Flavin-dependent monooxygenase pboD of Aspergillus ustus.